A 387-amino-acid chain; its full sequence is S-adenosylmethionine synthase (387 aa).

Histidine 15 contacts ATP. Aspartate 17 contributes to the Mg(2+) binding site. Glutamate 43 is a K(+) binding site. L-methionine is bound by residues glutamate 56 and glutamine 99. The interval glutamine 99–alanine 109 is flexible loop. ATP-binding positions include aspartate 166–lysine 168, arginine 232–phenylalanine 233, aspartate 241, arginine 247–lysine 248, alanine 264, and lysine 268. Position 241 (aspartate 241) interacts with L-methionine. Position 272 (lysine 272) interacts with L-methionine.

It belongs to the AdoMet synthase family. Homotetramer; dimer of dimers. Requires Mg(2+) as cofactor. K(+) is required as a cofactor.

It is found in the cytoplasm. It catalyses the reaction L-methionine + ATP + H2O = S-adenosyl-L-methionine + phosphate + diphosphate. It functions in the pathway amino-acid biosynthesis; S-adenosyl-L-methionine biosynthesis; S-adenosyl-L-methionine from L-methionine: step 1/1. Functionally, catalyzes the formation of S-adenosylmethionine (AdoMet) from methionine and ATP. The overall synthetic reaction is composed of two sequential steps, AdoMet formation and the subsequent tripolyphosphate hydrolysis which occurs prior to release of AdoMet from the enzyme. The sequence is that of S-adenosylmethionine synthase from Dechloromonas aromatica (strain RCB).